The following is a 158-amino-acid chain: 6,7-dimethyl-8-ribityllumazine synthase (158 aa).

5-amino-6-(D-ribitylamino)uracil-binding positions include Phe23, Ser61–Glu63, and Ala85–Ile87. A (2S)-2-hydroxy-3-oxobutyl phosphate-binding site is contributed by Glu90–Thr91. His93 acts as the Proton donor in catalysis. Residue Phe118 participates in 5-amino-6-(D-ribitylamino)uracil binding. Arg132 is a (2S)-2-hydroxy-3-oxobutyl phosphate binding site.

Belongs to the DMRL synthase family.

The catalysed reaction is (2S)-2-hydroxy-3-oxobutyl phosphate + 5-amino-6-(D-ribitylamino)uracil = 6,7-dimethyl-8-(1-D-ribityl)lumazine + phosphate + 2 H2O + H(+). It participates in cofactor biosynthesis; riboflavin biosynthesis; riboflavin from 2-hydroxy-3-oxobutyl phosphate and 5-amino-6-(D-ribitylamino)uracil: step 1/2. Catalyzes the formation of 6,7-dimethyl-8-ribityllumazine by condensation of 5-amino-6-(D-ribitylamino)uracil with 3,4-dihydroxy-2-butanone 4-phosphate. This is the penultimate step in the biosynthesis of riboflavin. This Prochlorococcus marinus subsp. pastoris (strain CCMP1986 / NIES-2087 / MED4) protein is 6,7-dimethyl-8-ribityllumazine synthase.